We begin with the raw amino-acid sequence, 501 residues long: Cytochrome P450 2J1 (501 aa).

C447 is a binding site for heme.

This sequence belongs to the cytochrome P450 family. Heme is required as a cofactor. Small intestine.

The protein localises to the endoplasmic reticulum membrane. Its subcellular location is the microsome membrane. The enzyme catalyses an organic molecule + reduced [NADPH--hemoprotein reductase] + O2 = an alcohol + oxidized [NADPH--hemoprotein reductase] + H2O + H(+). Functionally, catalyzes the N-demethylation of benzphetamine to formaldehyde. This is Cytochrome P450 2J1 (CYP2J1) from Oryctolagus cuniculus (Rabbit).